Here is a 593-residue protein sequence, read N- to C-terminus: Efflux pump FUB11 (593 aa).

The tract at residues 1-45 is disordered; that stretch reads MAIDPQPSSPSLSSETIANDTIGNDNNVNEPSVEPKTQEHQHTVP. Positions 9-30 are enriched in polar residues; that stretch reads SPSLSSETIANDTIGNDNNVNE. A glycan (N-linked (GlcNAc...) asparagine) is linked at Asn-19. 12 consecutive transmembrane segments (helical) span residues 98–118, 135–155, 167–187, 195–215, 227–247, 254–274, 337–357, 367–387, 410–430, 438–458, 468–488, and 503–523; these read WAFVLLQSLACLATTFASSAY, VATLGISLYVLGFTFGPLVWA, FFFTFMVATAFSAGAAGAGSI, FLTGSIGSAPLSNAPALIADM, MFSGAPFLGPAIGPIAGGFLG, WLHGLMAAFTGVTWIACTVFI, IYISIIYGTMYMCFAAFPIVF, IGGLAFTGIVIGVILSIISFA, LPPAIMGSLLIPIGLFWFAWT, IVPIIGTVFFAWGLVLVFMAL, IFAASIMAANSALRSLFGAAF, and WASSIPAFLALACVPFPFLFY. The disordered stretch occupies residues 570-593; the sequence is THNSHASAAHSHGHRRSLSYTRSA.

This sequence belongs to the major facilitator superfamily. DHA1 family. Polyamines/proton antiporter (TC 2.A.1.2.16) subfamily.

The protein localises to the cell membrane. Efflux pump involved in export of fusaric acid, a mycotoxin with low to moderate toxicity to animals and humans, but with high phytotoxic properties. Constitutes a self-protecting mechanism of the fungus against critical levels of FSA within the cell. In Gibberella moniliformis (strain M3125 / FGSC 7600) (Maize ear and stalk rot fungus), this protein is Efflux pump FUB11.